We begin with the raw amino-acid sequence, 617 residues long: Thioredoxin reductase (617 aa).

Residues 127 to 128 (PG), 147 to 150 (DYVK), 163 to 164 (TC), 168 to 172 (GCVPK), A237, D433, and 440 to 442 (ELA) each bind FAD. A disulfide bond links C164 and C169. The interval 514-528 (HRQKHIRAQKDEYDL) is loop important for the interaction with TRX1. Residue H585 coordinates FAD. The Proton acceptor role is filled by H585. Residues C611 and C616 are joined by a disulfide bond.

It belongs to the class-I pyridine nucleotide-disulfide oxidoreductase family. As to quaternary structure, homodimer. It depends on FAD as a cofactor.

Its subcellular location is the mitochondrion. It localises to the cytoplasm. The enzyme catalyses [thioredoxin]-dithiol + NADP(+) = [thioredoxin]-disulfide + NADPH + H(+). Functionally, catalyzes the transfer of electrons from NADPH to thioredoxins TRX1, TRX2 and TRX3, which in turn act as reductants of disulfide containing proteins. Able to reduce nitroglutathione (GSNO), a compound involved in the transport of nitric oxide (NO); however, TRX1 is more efficient in reducing GSNO. Has no catalytic activity towards oxidized glutathione (GSSG). This is Thioredoxin reductase from Plasmodium falciparum (isolate 3D7).